Reading from the N-terminus, the 471-residue chain is Tyrosine--tRNA ligase, mitochondrial (471 aa).

Tyr71 contacts L-tyrosine. ATP is bound at residue Asp75. The 'HIGH' region motif lies at Pro76 to His85. Residues Asp115, Tyr215, Gln219, Asp222, and Gln241 each coordinate L-tyrosine. 2 residues coordinate ATP: Ile268 and Lys278. A 'KMSKS' region motif is present at residues Lys275–Ser279. Lys349 and Lys361 each carry N6-acetyllysine.

It belongs to the class-I aminoacyl-tRNA synthetase family. In terms of assembly, homodimer.

The protein localises to the mitochondrion matrix. It carries out the reaction tRNA(Tyr) + L-tyrosine + ATP = L-tyrosyl-tRNA(Tyr) + AMP + diphosphate + H(+). Functionally, catalyzes the attachment of tyrosine to tRNA(Tyr) in a two-step reaction: tyrosine is first activated by ATP to form Tyr-AMP and then transferred to the acceptor end of tRNA(Tyr). The protein is Tyrosine--tRNA ligase, mitochondrial (Yars2) of Rattus norvegicus (Rat).